The sequence spans 63 residues: Large ribosomal subunit protein bL35 (63 aa).

Belongs to the bacterial ribosomal protein bL35 family.

This is Large ribosomal subunit protein bL35 from Sulfurovum sp. (strain NBC37-1).